A 181-amino-acid chain; its full sequence is Adenylate kinase (181 aa).

10–15 is an ATP binding site; that stretch reads GAGKGT. The NMP stretch occupies residues 30-59; sequence STGDLFRANIGQATALGVEAKKYIDAGELV. AMP-binding positions include Thr31, Arg36, 57 to 59, 85 to 88, and Gln92; these read ELV and GFPR. The LID stretch occupies residues 126–132; the sequence is ARGRADD. Residue Arg127 coordinates ATP. Residues Arg129 and Arg140 each coordinate AMP. Gly166 serves as a coordination point for ATP.

This sequence belongs to the adenylate kinase family. In terms of assembly, monomer.

The protein resides in the cytoplasm. It catalyses the reaction AMP + ATP = 2 ADP. It functions in the pathway purine metabolism; AMP biosynthesis via salvage pathway; AMP from ADP: step 1/1. Functionally, catalyzes the reversible transfer of the terminal phosphate group between ATP and AMP. Plays an important role in cellular energy homeostasis and in adenine nucleotide metabolism. The protein is Adenylate kinase of Rhodococcus erythropolis (strain PR4 / NBRC 100887).